Consider the following 91-residue polypeptide: Elongation factor 1-beta (91 aa).

The protein belongs to the EF-1-beta/EF-1-delta family.

Functionally, promotes the exchange of GDP for GTP in EF-1-alpha/GDP, thus allowing the regeneration of EF-1-alpha/GTP that could then be used to form the ternary complex EF-1-alpha/GTP/AAtRNA. The polypeptide is Elongation factor 1-beta (Caldivirga maquilingensis (strain ATCC 700844 / DSM 13496 / JCM 10307 / IC-167)).